We begin with the raw amino-acid sequence, 610 residues long: UvrABC system protein C (610 aa).

The GIY-YIG domain maps to 16–94; sequence HQPGVYRMYN…IKQYLPKYNV (79 aa). In terms of domain architecture, UVR spans 204–239; that stretch reads NQVLELLVQKMEIASQQLKFEDAAKFRDQIQAIRRV.

The protein belongs to the UvrC family. In terms of assembly, interacts with UvrB in an incision complex.

The protein localises to the cytoplasm. In terms of biological role, the UvrABC repair system catalyzes the recognition and processing of DNA lesions. UvrC both incises the 5' and 3' sides of the lesion. The N-terminal half is responsible for the 3' incision and the C-terminal half is responsible for the 5' incision. The sequence is that of UvrABC system protein C from Vibrio vulnificus (strain CMCP6).